The primary structure comprises 412 residues: 2,3-bisphosphoglycerate-independent phosphoglycerate mutase (412 aa).

Belongs to the BPG-independent phosphoglycerate mutase family. A-PGAM subfamily.

The enzyme catalyses (2R)-2-phosphoglycerate = (2R)-3-phosphoglycerate. It participates in carbohydrate degradation; glycolysis; pyruvate from D-glyceraldehyde 3-phosphate: step 3/5. Its function is as follows. Catalyzes the interconversion of 2-phosphoglycerate and 3-phosphoglycerate. The chain is 2,3-bisphosphoglycerate-independent phosphoglycerate mutase (apgM) from Pyrococcus horikoshii (strain ATCC 700860 / DSM 12428 / JCM 9974 / NBRC 100139 / OT-3).